We begin with the raw amino-acid sequence, 396 residues long: NADH-quinone oxidoreductase subunit D (396 aa).

This sequence belongs to the complex I 49 kDa subunit family. As to quaternary structure, NDH-1 is composed of 14 different subunits. Subunits NuoB, C, D, E, F, and G constitute the peripheral sector of the complex.

It localises to the cell inner membrane. It carries out the reaction a quinone + NADH + 5 H(+)(in) = a quinol + NAD(+) + 4 H(+)(out). NDH-1 shuttles electrons from NADH, via FMN and iron-sulfur (Fe-S) centers, to quinones in the respiratory chain. The immediate electron acceptor for the enzyme in this species is believed to be ubiquinone. Couples the redox reaction to proton translocation (for every two electrons transferred, four hydrogen ions are translocated across the cytoplasmic membrane), and thus conserves the redox energy in a proton gradient. The polypeptide is NADH-quinone oxidoreductase subunit D (Methylorubrum populi (strain ATCC BAA-705 / NCIMB 13946 / BJ001) (Methylobacterium populi)).